The sequence spans 192 residues: uncharacterized protein (192 aa).

The protein to A.aeolicus AQ_054.

This is an uncharacterized protein from Thermotoga maritima (strain ATCC 43589 / DSM 3109 / JCM 10099 / NBRC 100826 / MSB8).